Consider the following 371-residue polypeptide: Peptide chain release factor 2 (371 aa).

Residue glutamine 252 is modified to N5-methylglutamine.

The protein belongs to the prokaryotic/mitochondrial release factor family. Post-translationally, methylated by PrmC. Methylation increases the termination efficiency of RF2.

It is found in the cytoplasm. In terms of biological role, peptide chain release factor 2 directs the termination of translation in response to the peptide chain termination codons UGA and UAA. The protein is Peptide chain release factor 2 of Staphylococcus haemolyticus (strain JCSC1435).